We begin with the raw amino-acid sequence, 184 residues long: ATP synthase subunit b, chloroplastic (184 aa).

The helical transmembrane segment at 27 to 49 (FATNPINLSVVLGVLIFFGKGVL) threads the bilayer.

It belongs to the ATPase B chain family. F-type ATPases have 2 components, F(1) - the catalytic core - and F(0) - the membrane proton channel. F(1) has five subunits: alpha(3), beta(3), gamma(1), delta(1), epsilon(1). F(0) has four main subunits: a(1), b(1), b'(1) and c(10-14). The alpha and beta chains form an alternating ring which encloses part of the gamma chain. F(1) is attached to F(0) by a central stalk formed by the gamma and epsilon chains, while a peripheral stalk is formed by the delta, b and b' chains.

The protein resides in the plastid. It localises to the chloroplast thylakoid membrane. F(1)F(0) ATP synthase produces ATP from ADP in the presence of a proton or sodium gradient. F-type ATPases consist of two structural domains, F(1) containing the extramembraneous catalytic core and F(0) containing the membrane proton channel, linked together by a central stalk and a peripheral stalk. During catalysis, ATP synthesis in the catalytic domain of F(1) is coupled via a rotary mechanism of the central stalk subunits to proton translocation. Functionally, component of the F(0) channel, it forms part of the peripheral stalk, linking F(1) to F(0). The polypeptide is ATP synthase subunit b, chloroplastic (Amborella trichopoda).